Consider the following 467-residue polypeptide: Uronate isomerase (467 aa).

This sequence belongs to the metallo-dependent hydrolases superfamily. Uronate isomerase family.

The catalysed reaction is D-glucuronate = D-fructuronate. The enzyme catalyses aldehydo-D-galacturonate = keto-D-tagaturonate. The protein operates within carbohydrate metabolism; pentose and glucuronate interconversion. This Actinobacillus succinogenes (strain ATCC 55618 / DSM 22257 / CCUG 43843 / 130Z) protein is Uronate isomerase.